Consider the following 544-residue polypeptide: Intercellular adhesion molecule 3 (544 aa).

Residues 1–31 form the signal peptide; that stretch reads MIASGPPPRVYWTSLIFLLLACCLLPTGAQG. The Extracellular segment spans residues 32 to 486; the sequence is QTYQVRVEPK…MMDVQGRNPV (455 aa). The Ig-like C2-type 1 domain occupies 48–105; the sequence is GEPLVVNCTLDCPGPGLISLETALSKEPHSRGLGWAAFRLTNVTGDMEILCSGICNKS. Residues Asn54, Asn89, Asn103, Asn112, Asn138, Asn190, Asn209, Asn243, Asn267, Asn296, Asn321, and Asn326 are each glycosylated (N-linked (GlcNAc...) asparagine). 2 disulfide bridges follow: Cys55–Cys98 and Cys59–Cys102. Residues 134 to 200 form the Ig-like C2-type 2 domain; it reads GEELNLSCLV…FSCRSELDLR (67 aa). A disulfide bridge connects residues Cys141 and Cys193. The Ig-like C2-type 3 domain maps to 237–302; that stretch reads ETSWPVNCSL…IVCNVTLGVE (66 aa). A disulfide bridge links Cys244 with Cys295. In terms of domain architecture, Ig-like C2-type 4 spans 330-383; sequence GTPVTVTCAAGPQVQVMLDGVPAAVPGQPAQLQLKATEMDDRRTFFCNATLKVH. Cys337 and Cys376 are joined by a disulfide. N-linked (GlcNAc...) asparagine glycans are attached at residues Asn377, Asn390, and Asn456. In terms of domain architecture, Ig-like C2-type 5 spans 417–470; sequence KTMHILQCQARGNPNPQLQCLREGSKFKVPVGIPFLVLLNYSGTYSCQAASSRG. A disulfide bond links Cys424 and Cys463. Residues 487 to 511 form a helical membrane-spanning segment; sequence TINIVLGVLAILGLVTLAAASVYVF. Residues 512-544 lie on the Cytoplasmic side of the membrane; it reads WVQRQHDIYHLTPRSTRWRLTSTQPVTVAEELS.

Belongs to the immunoglobulin superfamily. ICAM family. As to quaternary structure, interacts with moesin/MSN. Leukocytes.

The protein localises to the membrane. ICAM proteins are ligands for the leukocyte adhesion protein LFA-1 (integrin alpha-L/beta-2). ICAM3 is also a ligand for integrin alpha-D/beta-2. In association with integrin alpha-L/beta-2, contributes to apoptotic neutrophil phagocytosis by macrophages. The protein is Intercellular adhesion molecule 3 (ICAM3) of Bos taurus (Bovine).